Here is a 194-residue protein sequence, read N- to C-terminus: uncharacterized protein (194 aa).

Residues 77 to 92 (QTQPQHQTLSQHLPQT) are compositionally biased toward polar residues. The tract at residues 77-96 (QTQPQHQTLSQHLPQTHHTD) is disordered. A helical membrane pass occupies residues 169–189 (FWEILLLIILIAVLVYGIYWL).

It is found in the host membrane. The protein resides in the virion. This is an uncharacterized protein from Acanthamoeba polyphaga (Amoeba).